The following is a 383-amino-acid chain: tRNA(Met) cytidine acetate ligase (383 aa).

ATP-binding positions include 7 to 20, Gly-101, Asn-153, and 178 to 179; these read IAEFNPLHSGHEFL and RI.

The protein belongs to the TmcAL family.

Its subcellular location is the cytoplasm. It carries out the reaction cytidine(34) in elongator tRNA(Met) + acetate + ATP = N(4)-acetylcytidine(34) in elongator tRNA(Met) + AMP + diphosphate. Its function is as follows. Catalyzes the formation of N(4)-acetylcytidine (ac(4)C) at the wobble position of elongator tRNA(Met), using acetate and ATP as substrates. First activates an acetate ion to form acetyladenylate (Ac-AMP) and then transfers the acetyl group to tRNA to form ac(4)C34. In Lactobacillus acidophilus (strain ATCC 700396 / NCK56 / N2 / NCFM), this protein is tRNA(Met) cytidine acetate ligase.